We begin with the raw amino-acid sequence, 349 residues long: Phosphoribosylformylglycinamidine cyclo-ligase (349 aa).

This sequence belongs to the AIR synthase family.

The protein localises to the cytoplasm. It catalyses the reaction 2-formamido-N(1)-(5-O-phospho-beta-D-ribosyl)acetamidine + ATP = 5-amino-1-(5-phospho-beta-D-ribosyl)imidazole + ADP + phosphate + H(+). Its pathway is purine metabolism; IMP biosynthesis via de novo pathway; 5-amino-1-(5-phospho-D-ribosyl)imidazole from N(2)-formyl-N(1)-(5-phospho-D-ribosyl)glycinamide: step 2/2. The sequence is that of Phosphoribosylformylglycinamidine cyclo-ligase from Lactobacillus delbrueckii subsp. bulgaricus (strain ATCC BAA-365 / Lb-18).